The following is a 273-amino-acid chain: Transcriptional regulator ICP22 homolog (273 aa).

2 disordered regions span residues 1 to 57 and 160 to 273; these read GSCR…YGLP and YEQR…SARR. A compositionally biased stretch (low complexity) spans 11–33; that stretch reads PSTSPIIPSLSPSSGGNPSPRSS. 2 stretches are compositionally biased toward acidic residues: residues 178–194 and 204–224; these read EECE…EEEA and SPEE…EDDS. Residues 261-273 are compositionally biased toward low complexity; it reads VPKGGRPAKSARR.

The protein belongs to the herpesviridae ICP22 family.

The protein is Transcriptional regulator ICP22 homolog of Equus caballus (Horse).